The sequence spans 955 residues: GPI inositol-deacylase B (955 aa).

N7 carries N-linked (GlcNAc...) asparagine glycosylation. The helical transmembrane segment at 8-28 (ASVALWTVFTILTIWISFALH) threads the bilayer. Residue S180 is part of the active site. N431 carries N-linked (GlcNAc...) asparagine glycosylation. The next 4 helical transmembrane spans lie at 489–509 (IAFP…SGGV), 600–620 (LLFS…FWRY), 643–663 (YLSW…FEFI), and 703–723 (PIGV…VVVV). N753 is a glycosylation site (N-linked (GlcNAc...) asparagine). A run of 3 helical transmembrane segments spans residues 772 to 792 (VIIA…LAFA), 840 to 860 (TMSV…AVWV), and 870 to 890 (IFSS…IENL). N-linked (GlcNAc...) asparagine glycosylation occurs at N914. The chain crosses the membrane as a helical span at residues 919–939 (GMMHAFMIHHWFNLLAGWLLI). N-linked (GlcNAc...) asparagine glycosylation is present at N945.

It belongs to the GPI inositol-deacylase family.

It localises to the endoplasmic reticulum membrane. Involved in inositol deacylation of GPI-anchored proteins which plays important roles in the quality control and ER-associated degradation of GPI-anchored proteins. This Yarrowia lipolytica (strain CLIB 122 / E 150) (Yeast) protein is GPI inositol-deacylase B (BST1B).